A 137-amino-acid chain; its full sequence is Holo-[acyl-carrier-protein] synthase (137 aa).

Mg(2+) is bound by residues D8 and E57.

Belongs to the P-Pant transferase superfamily. AcpS family. It depends on Mg(2+) as a cofactor.

The protein localises to the cytoplasm. The catalysed reaction is apo-[ACP] + CoA = holo-[ACP] + adenosine 3',5'-bisphosphate + H(+). Its function is as follows. Transfers the 4'-phosphopantetheine moiety from coenzyme A to a Ser of acyl-carrier-protein. The chain is Holo-[acyl-carrier-protein] synthase from Hyphomonas neptunium (strain ATCC 15444).